We begin with the raw amino-acid sequence, 320 residues long: Malate dehydrogenase (320 aa).

Residues 10–15 (GSGMIG) and aspartate 34 each bind NAD(+). Substrate contacts are provided by arginine 83 and arginine 89. NAD(+) is bound by residues asparagine 96 and 119–121 (ITN). Residues asparagine 121 and arginine 152 each coordinate substrate. Histidine 176 serves as the catalytic Proton acceptor.

The protein belongs to the LDH/MDH superfamily. MDH type 3 family.

The catalysed reaction is (S)-malate + NAD(+) = oxaloacetate + NADH + H(+). In terms of biological role, catalyzes the reversible oxidation of malate to oxaloacetate. This Rhizobium meliloti (strain 1021) (Ensifer meliloti) protein is Malate dehydrogenase.